The primary structure comprises 825 residues: Cytosolic phospholipase A2 delta (825 aa).

The C2 domain occupies 14–133; sequence SPERLHGHPY…LPGQLLQKTF (120 aa). Residues D47, D53, D103, D105, and D111 each contribute to the Ca(2+) site. The region spanning 281–825 is the PLA2c domain; sequence DCCPKELSVR…SETRPLGVKT (545 aa). A substrate-binding site is contributed by 339–340; that stretch reads GG. S370 (nucleophile) is an active-site residue. D654 functions as the Proton acceptor in the catalytic mechanism.

Ca(2+) serves as cofactor. In terms of tissue distribution, weakly or not expressed in most tissues. Detected in placenta of 17.5 dpc embryos.

It localises to the cytoplasm. Its subcellular location is the cytosol. The protein localises to the membrane. The enzyme catalyses a 1,2-diacyl-sn-glycero-3-phosphocholine + H2O = a 1-acyl-sn-glycero-3-phosphocholine + a fatty acid + H(+). The catalysed reaction is 1-hexadecanoyl-2-(5Z,8Z,11Z,14Z-eicosatetraenoyl)-sn-glycero-3-phosphocholine + H2O = 1-hexadecanoyl-sn-glycero-3-phosphocholine + (5Z,8Z,11Z,14Z)-eicosatetraenoate + H(+). It catalyses the reaction 1-hexadecanoyl-2-(9Z,12Z-octadecadienoyl)-sn-glycero-3-phosphocholine + H2O = (9Z,12Z)-octadecadienoate + 1-hexadecanoyl-sn-glycero-3-phosphocholine + H(+). It carries out the reaction 1-hexadecanoyl-2-(9Z-octadecenoyl)-sn-glycero-3-phosphocholine + H2O = 1-hexadecanoyl-sn-glycero-3-phosphocholine + (9Z)-octadecenoate + H(+). The enzyme catalyses 1-hexadecanoyl-2-(5Z,8Z,11Z,14Z-eicosatetraenoyl)-sn-glycero-3-phosphoethanolamine + H2O = 1-hexadecanoyl-sn-glycero-3-phosphoethanolamine + (5Z,8Z,11Z,14Z)-eicosatetraenoate + H(+). The catalysed reaction is 1-hexadecanoyl-2-(9Z,12Z-octadecadienoyl)-sn-glycero-3-phosphoethanolamine + H2O = 1-hexadecanoyl-sn-glycero-3-phosphoethanolamine + (9Z,12Z)-octadecadienoate + H(+). It catalyses the reaction 1-hexadecanoyl-sn-glycero-3-phosphocholine + H2O = sn-glycerol 3-phosphocholine + hexadecanoate + H(+). Its pathway is lipid metabolism; fatty acid metabolism. Stimulated by cytosolic Ca(2+). Calcium-dependent phospholipase A2 that selectively hydrolyzes glycerophospholipids in the sn-2 position. Compared to its human ortholog, may have no preference for the fatty acid found at the sn-2 position. This is Cytosolic phospholipase A2 delta from Mus musculus (Mouse).